Reading from the N-terminus, the 247-residue chain is Carboxy-S-adenosyl-L-methionine synthase (247 aa).

S-adenosyl-L-methionine-binding positions include Y39, 64-66 (GCS), 89-90 (DN), 117-118 (DI), N132, and R199.

The protein belongs to the class I-like SAM-binding methyltransferase superfamily. Cx-SAM synthase family. As to quaternary structure, homodimer.

The catalysed reaction is prephenate + S-adenosyl-L-methionine = carboxy-S-adenosyl-L-methionine + 3-phenylpyruvate + H2O. Catalyzes the conversion of S-adenosyl-L-methionine (SAM) to carboxy-S-adenosyl-L-methionine (Cx-SAM). The sequence is that of Carboxy-S-adenosyl-L-methionine synthase from Salmonella enteritidis PT4 (strain P125109).